A 20-amino-acid chain; its full sequence is Tetracycline resistance leader peptide (20 aa).

Residues 1–20 (MKCNKMNRVQLKEGSVSMTL) form a disordered region.

The protein is Tetracycline resistance leader peptide (tetL) of Bacillus subtilis (strain 168).